A 688-amino-acid chain; its full sequence is MSRTVDLKNFRNFGIMAHIDAGKTTTSERILFHSGRIHKIGETHDGESVMDWMEQEKERGITITSAATSVSWKNCSLNLIDTPGHVDFTVEVERSLRVLDGAIAVLDAQMGVEPQTETVWRQASRYEVPRVIFVNKMDKTGANFERSVLSIQQRLGVKAVPIQFPIGAENDFNGIIDIITKKAYFFDGNKEENAIEKPIPEQYVDQVEKLYNNLVEEVASLDDQLMADYLDGKPIEIDAIKNAIRNGVIHCKFFPVLCGSAFKNKGIKLLLDAVVDFLPSPVDVPPAKAIDANNKEISIKASDDANFIGLAFKVATDPFVGRLTFIRVYAGVLKSGSYVKNVRKNKKERVSRLVKMHAQNRNEIDEIRAGDICAVIGLKDTTTGETLTDDKLDVQLEAMQFAEPVISLAVEPKTKADQEKMSIALSKLAEEDPTFKTFSDPETGQTIIAGMGELHLDILVDRMKREFKVEVNIGAPQVSFRETFKSTSEVEGKYIKQSGGRGQYGHVKIRFEPNKDKGFEFVDKIVGGRIPREYIKPVQTGLENAMNSGPLAGYPMIDIKATLFDGSFHEVDSSEMAFKIAASLALKEAGKQCNPVLLEPIMAIEVTVPEQYFGDTMGDISSRRGIIEGTEQRDNVQLIKAKVPLKEMFGYATDLRSFSQGRGNYVMQFSHYAETPKSVVNEIIANKK.

The 275-residue stretch at 8–282 folds into the tr-type G domain; it reads KNFRNFGIMA…AVVDFLPSPV (275 aa). Residues 17-24, 81-85, and 135-138 contribute to the GTP site; these read AHIDAGKT, DTPGH, and NKMD.

Belongs to the TRAFAC class translation factor GTPase superfamily. Classic translation factor GTPase family. EF-G/EF-2 subfamily.

The protein localises to the cytoplasm. Functionally, catalyzes the GTP-dependent ribosomal translocation step during translation elongation. During this step, the ribosome changes from the pre-translocational (PRE) to the post-translocational (POST) state as the newly formed A-site-bound peptidyl-tRNA and P-site-bound deacylated tRNA move to the P and E sites, respectively. Catalyzes the coordinated movement of the two tRNA molecules, the mRNA and conformational changes in the ribosome. This Mycoplasma genitalium (strain ATCC 33530 / DSM 19775 / NCTC 10195 / G37) (Mycoplasmoides genitalium) protein is Elongation factor G (fusA).